The primary structure comprises 230 residues: Large ribosomal subunit protein uL1 (230 aa).

This sequence belongs to the universal ribosomal protein uL1 family. As to quaternary structure, part of the 50S ribosomal subunit.

In terms of biological role, binds directly to 23S rRNA. The L1 stalk is quite mobile in the ribosome, and is involved in E site tRNA release. Its function is as follows. Protein L1 is also a translational repressor protein, it controls the translation of the L11 operon by binding to its mRNA. This chain is Large ribosomal subunit protein uL1, found in Onion yellows phytoplasma (strain OY-M).